The following is a 195-amino-acid chain: Protein Nef (195 aa).

Residue Gly2 is the site of N-myristoyl glycine; by host attachment. The N-terminal; associates with the host plasma membrane stretch occupies residues 2 to 53 (GNIFGRWPGARKAIEDLHNTSSEPVGQASQDLQNKGGLTTNTLGTSADVLEY). The interval 7–22 (RWPGARKAIEDLHNTS) is necessary for MHC-I internalization. The segment at 59–61 (EEE) is acidic. The segment at 65–74 (PVRPAVPMRP) is SH3-binding. Residues 65-74 (PVRPAVPMRP) are SH3-binding; interaction with Src family tyrosine kinases. The short motif at 68-71 (PAVP) is the PxxP element. Residues 104-120 (AILDTWMYNTQGVFPDW) are mediates dimerization. Residues 144 to 171 (VDPPEDDEKNILLHPACSHGTTDPDGET) form a binding to ATP6V1H region. The Di-leucine internalization motif; necessary for CD4 internalization signature appears at 155–156 (LL).

The protein belongs to the lentivirus primate group Nef protein family. Homodimer.

Its subcellular location is the host cell membrane. The protein resides in the host cytoplasm. The protein localises to the host perinuclear region. It localises to the virion. It is found in the secreted. Functionally, factor of infectivity and pathogenicity, required for optimal virus replication. Alters numerous pathways of T-lymphocyte function and down-regulates immunity surface molecules in order to evade host defense and increase viral infectivity. Alters the functionality of other immunity cells, like dendritic cells, monocytes/macrophages and NK cells. One of the earliest and most abundantly expressed viral proteins. In infected CD4(+) T-lymphocytes, down-regulates the surface MHC-I, mature MHC-II, CD4, CD28 and probably other immunity surface molecules. In consequence infected cells are masked for immune recognition by cytotoxic T-lymphocytes. Decreasing the number of immune receptors also prevents reinfection by more HIV particles (superinfection). In terms of biological role, bypasses host T-cell signaling by inducing a transcriptional program nearly identical to that of anti-CD3 cell activation. Interaction with TCR-zeta chain up-regulates the Fas ligand (FasL). Increasing surface FasL molecules and decreasing surface MHC-I molecules on infected CD4(+) cells send attacking cytotoxic CD8+ T-lymphocytes into apoptosis. Its function is as follows. Plays a role in optimizing the host cell environment for viral replication without causing cell death by apoptosis. Protects the infected cells from apoptosis in order to keep them alive until the next virus generation is ready to strike. The protein is Protein Nef of Pan troglodytes (Chimpanzee).